The primary structure comprises 534 residues: Beta-glucosidase 31 (534 aa).

An N-terminal signal peptide occupies residues 1–22 (MAIKLIALVITLCVASWDVAQG). Gln51 serves as a coordination point for a beta-D-glucoside. An N-linked (GlcNAc...) asparagine glycan is attached at Asn68. A beta-D-glucoside contacts are provided by residues His154 and 199–200 (NE). The active-site Proton donor is the Glu200. A disulfide bridge links Cys219 with Cys227. Tyr344 lines the a beta-D-glucoside pocket. Asn374 carries N-linked (GlcNAc...) asparagine glycosylation. Glu417 provides a ligand contact to a beta-D-glucoside. The active-site Nucleophile is the Glu417. Asn425 is a glycosylation site (N-linked (GlcNAc...) asparagine). Residues Trp467, 474 to 475 (EW), and Phe483 each bind a beta-D-glucoside.

Belongs to the glycosyl hydrolase 1 family.

It carries out the reaction Hydrolysis of terminal, non-reducing beta-D-glucosyl residues with release of beta-D-glucose.. In Arabidopsis thaliana (Mouse-ear cress), this protein is Beta-glucosidase 31.